A 357-amino-acid chain; its full sequence is Aspartate-semialdehyde dehydrogenase (357 aa).

The NADP(+) site is built by Thr12, Gly13, Thr14, Val15, Ser37, Ser40, Leu84, and Asp85. Cys151 acts as the Acyl-thioester intermediate in catalysis. Position 183 (Gly183) interacts with NADP(+). His247 acts as the Proton acceptor in catalysis. The residue at position 323 (Ser323) is a Phosphoserine. Residue Asn335 coordinates NADP(+).

This sequence belongs to the aspartate-semialdehyde dehydrogenase family.

Its subcellular location is the cytoplasm. It localises to the cytosol. The protein localises to the nucleus. The catalysed reaction is L-aspartate 4-semialdehyde + phosphate + NADP(+) = 4-phospho-L-aspartate + NADPH + H(+). It participates in amino-acid biosynthesis; L-methionine biosynthesis via de novo pathway; L-homoserine from L-aspartate: step 2/3. The protein operates within amino-acid biosynthesis; L-threonine biosynthesis; L-threonine from L-aspartate: step 2/5. Its function is as follows. Catalyzes the NADPH-dependent formation of L-aspartate 4-semialdehyde (L-ASA) by the reductive dephosphorylation of 4-phospho-L-aspartate. Mediates the second step in the biosynthesis of amino acids that derive from aspartate (the aspartate family of amino acids), including methioinine and threonine, the latter of which is a precursor to isoleucine. The protein is Aspartate-semialdehyde dehydrogenase of Schizosaccharomyces pombe (strain 972 / ATCC 24843) (Fission yeast).